Consider the following 383-residue polypeptide: Galactokinase (383 aa).

Residue 34–37 (EHTD) participates in substrate binding. 124–130 (GAGLSSS) contributes to the ATP binding site. Residues Ser130 and Glu162 each contribute to the Mg(2+) site. Asp174 (proton acceptor) is an active-site residue. Tyr223 contacts substrate.

The protein belongs to the GHMP kinase family. GalK subfamily.

The protein resides in the cytoplasm. The enzyme catalyses alpha-D-galactose + ATP = alpha-D-galactose 1-phosphate + ADP + H(+). It functions in the pathway carbohydrate metabolism; galactose metabolism. Functionally, catalyzes the transfer of the gamma-phosphate of ATP to D-galactose to form alpha-D-galactose-1-phosphate (Gal-1-P). This is Galactokinase from Yersinia pseudotuberculosis serotype IB (strain PB1/+).